The sequence spans 446 residues: ATP-dependent protease ATPase subunit HslU (446 aa).

ATP contacts are provided by residues Val-18, 60-65, Asp-259, Glu-324, and Arg-396; that span reads GVGKTE.

The protein belongs to the ClpX chaperone family. HslU subfamily. In terms of assembly, a double ring-shaped homohexamer of HslV is capped on each side by a ring-shaped HslU homohexamer. The assembly of the HslU/HslV complex is dependent on binding of ATP.

Its subcellular location is the cytoplasm. In terms of biological role, ATPase subunit of a proteasome-like degradation complex; this subunit has chaperone activity. The binding of ATP and its subsequent hydrolysis by HslU are essential for unfolding of protein substrates subsequently hydrolyzed by HslV. HslU recognizes the N-terminal part of its protein substrates and unfolds these before they are guided to HslV for hydrolysis. The sequence is that of ATP-dependent protease ATPase subunit HslU from Acidovorax ebreus (strain TPSY) (Diaphorobacter sp. (strain TPSY)).